The primary structure comprises 184 residues: Inorganic pyrophosphatase (184 aa).

Residues Lys-19, Arg-33, and Tyr-45 each coordinate substrate. Residues Asp-55, Asp-60, and Asp-92 each contribute to the Mg(2+) site. Tyr-129 contacts substrate.

The protein belongs to the PPase family. As to quaternary structure, homohexamer. The cofactor is Mg(2+).

The protein resides in the cytoplasm. The catalysed reaction is diphosphate + H2O = 2 phosphate + H(+). Its function is as follows. Catalyzes the hydrolysis of inorganic pyrophosphate (PPi) forming two phosphate ions. The sequence is that of Inorganic pyrophosphatase from Mycoplasma genitalium (strain ATCC 33530 / DSM 19775 / NCTC 10195 / G37) (Mycoplasmoides genitalium).